The primary structure comprises 1890 residues: Putative aminopeptidase-2 (1890 aa).

The first 20 residues, 1 to 20 (MRRKLLLLLCFIGLFSLIST), serve as a signal peptide directing secretion. Asparagine 110 is a glycosylation site (N-linked (GlcNAc...) asparagine). Residues glutamate 220 and 354–358 (GAMEN) contribute to the substrate site. Position 390 (histidine 390) interacts with Zn(2+). Glutamate 391 (proton acceptor) is an active-site residue. The Zn(2+) site is built by histidine 394 and glutamate 413. 7 N-linked (GlcNAc...) asparagine glycosylation sites follow: asparagine 534, asparagine 581, asparagine 785, asparagine 803, asparagine 914, asparagine 1024, and asparagine 1094. Glutamate 1143 is a substrate binding site. A glycan (N-linked (GlcNAc...) asparagine) is linked at asparagine 1245. A substrate-binding site is contributed by 1280 to 1284 (GAMEN). Histidine 1316 serves as a coordination point for Zn(2+). The Proton acceptor role is filled by glutamate 1317. Residues histidine 1320 and glutamate 1339 each coordinate Zn(2+). N-linked (GlcNAc...) asparagine glycans are attached at residues asparagine 1451, asparagine 1521, asparagine 1826, and asparagine 1841.

It belongs to the peptidase M1 family. Zn(2+) serves as cofactor.

In terms of biological role, putative aminopeptidase which plays a role in oocyte maturation. The sequence is that of Putative aminopeptidase-2 from Caenorhabditis elegans.